Reading from the N-terminus, the 124-residue chain is Small ribosomal subunit protein uS13 (124 aa).

Residues 95–124 form a disordered region; sequence GLPVRGQRTKTNARTRKGPKRTVAGKKKAR.

It belongs to the universal ribosomal protein uS13 family. Part of the 30S ribosomal subunit. Forms a loose heterodimer with protein S19. Forms two bridges to the 50S subunit in the 70S ribosome.

Functionally, located at the top of the head of the 30S subunit, it contacts several helices of the 16S rRNA. In the 70S ribosome it contacts the 23S rRNA (bridge B1a) and protein L5 of the 50S subunit (bridge B1b), connecting the 2 subunits; these bridges are implicated in subunit movement. Contacts the tRNAs in the A and P-sites. This chain is Small ribosomal subunit protein uS13, found in Leifsonia xyli subsp. xyli (strain CTCB07).